A 545-amino-acid chain; its full sequence is Protein disulfide isomerase-like 1-3 (545 aa).

Positions 1–16 are enriched in pro residues; sequence MWPRAPATPPPPPWPS. Residues 1-24 are disordered; the sequence is MWPRAPATPPPPPWPSKPSAASRS. The Thioredoxin 1 domain maps to 55–189; the sequence is ASSTAFAAAF…IVAYLKRQAG (135 aa). N87 carries an N-linked (GlcNAc...) asparagine glycan. Catalysis depends on nucleophile residues C107 and C110. C107 and C110 form a disulfide bridge. N349 is a glycosylation site (N-linked (GlcNAc...) asparagine). Positions 403–545 constitute a Thioredoxin 2 domain; the sequence is FTEGTLAPHV…TTTESVKDEL (143 aa). Active-site nucleophile residues include C453 and C456. A disulfide bridge connects residues C453 and C456. Positions 542–545 match the Prevents secretion from ER motif; the sequence is KDEL.

It belongs to the protein disulfide isomerase family.

It localises to the endoplasmic reticulum lumen. It carries out the reaction Catalyzes the rearrangement of -S-S- bonds in proteins.. Its function is as follows. Acts as a protein-folding catalyst that interacts with nascent polypeptides to catalyze the formation, isomerization, and reduction or oxidation of disulfide bonds. May play a role in storage protein biogenesis. This Oryza sativa subsp. japonica (Rice) protein is Protein disulfide isomerase-like 1-3 (PDIL1-3).